A 424-amino-acid chain; its full sequence is Acetyl-CoA acetyltransferase, mitochondrial (424 aa).

The transit peptide at 1–30 directs the protein to the mitochondrion; it reads MAALAVLHGVVRRPLLRGLLQEVRCLGRSY. Lysine 63 is subject to N6-acetyllysine; alternate. Lysine 63 carries the N6-succinyllysine; alternate modification. Lysine 75 is modified (N6-succinyllysine). The Acyl-thioester intermediate role is filled by cysteine 123. 4 positions are modified to N6-acetyllysine; alternate: lysine 171, lysine 178, lysine 187, and lysine 199. 4 positions are modified to N6-succinyllysine; alternate: lysine 171, lysine 178, lysine 187, and lysine 199. Serine 204 is modified (phosphoserine). Tyrosine 216 lines the CoA pocket. Tyrosine 216 provides a ligand contact to K(+). Residues lysine 220 and lysine 227 each carry the N6-acetyllysine; alternate modification. Residues lysine 220 and lysine 227 each carry the N6-succinyllysine; alternate modification. Lysine 240 is subject to N6-succinyllysine. Position 242 is an N6-acetyllysine; alternate (lysine 242). Lysine 242 carries the post-translational modification N6-succinyllysine; alternate. 2 positions are modified to N6-acetyllysine: lysine 248 and lysine 254. Residues 255–257 and lysine 260 each bind CoA; that span reads RVD. The residue at position 260 (lysine 260) is an N6-acetyllysine; alternate. N6-succinyllysine; alternate is present on lysine 260. Lysine 263 and lysine 265 each carry N6-succinyllysine. At lysine 270 the chain carries N6-acetyllysine. 3 residues coordinate K(+): alanine 277, alanine 278, and alanine 280. Serine 281 lines the CoA pocket. An N6-acetyllysine modification is found at lysine 335. Valine 378 contributes to the K(+) binding site. Cysteine 410 functions as the Proton donor/acceptor in the catalytic mechanism.

This sequence belongs to the thiolase-like superfamily. Thiolase family. In terms of assembly, homotetramer. Post-translationally, succinylation at Lys-265, adjacent to a coenzyme A binding site. Desuccinylated by SIRT5.

The protein resides in the mitochondrion. It carries out the reaction 2 acetyl-CoA = acetoacetyl-CoA + CoA. It catalyses the reaction propanoyl-CoA + acetyl-CoA = 2-methyl-3-oxobutanoyl-CoA + CoA. It participates in lipid metabolism; fatty acid beta-oxidation. Activated by potassium ions, but not sodium ions. This is one of the enzymes that catalyzes the last step of the mitochondrial beta-oxidation pathway, an aerobic process breaking down fatty acids into acetyl-CoA. Using free coenzyme A/CoA, catalyzes the thiolytic cleavage of medium- to long-chain 3-oxoacyl-CoAs into acetyl-CoA and a fatty acyl-CoA shortened by two carbon atoms. The activity of the enzyme is reversible and it can also catalyze the condensation of two acetyl-CoA molecules into acetoacetyl-CoA. Thereby, it plays a major role in ketone body metabolism. The protein is Acetyl-CoA acetyltransferase, mitochondrial (Acat1) of Rattus norvegicus (Rat).